Reading from the N-terminus, the 660-residue chain is Arginine--tRNA ligase, cytoplasmic (660 aa).

Residue M1 is modified to N-acetylmethionine. Residues M1–N72 are could be involved in the assembly of the multisynthetase complex. Residues S200–N202, H211, Y384, D388, and Q412 contribute to the L-arginine site. A 'HIGH' region motif is present at residues P201–L212. Positions N529–S543 are interaction with tRNA.

Belongs to the class-I aminoacyl-tRNA synthetase family. Interacts (via N-terminus) with AIMP1 (via N-terminus); this stimulates its catalytic activity. Interacts (via N-terminus) with LARS2 (via C-terminus). Monomer. Part of a multisubunit complex that groups tRNA ligases for Arg (RARS1), Asp (DARS1), Gln (QARS1), Ile (IARS1), Leu (LARS1), Lys (KARS1), Met (MARS1) the bifunctional ligase for Glu and Pro (EPRS1) and the auxiliary subunits AIMP1/p43, AIMP2/p38 and EEF1E1/p18. Interacts with QARS1. Part of a complex composed of RARS1, QARS1 and AIMP1. In terms of tissue distribution, detected in dorsal root ganglion.

Its subcellular location is the cytoplasm. The protein localises to the cytosol. The enzyme catalyses tRNA(Arg) + L-arginine + ATP = L-arginyl-tRNA(Arg) + AMP + diphosphate. Forms part of a macromolecular complex that catalyzes the attachment of specific amino acids to cognate tRNAs during protein synthesis. Modulates the secretion of AIMP1 and may be involved in generation of the inflammatory cytokine EMAP2 from AIMP1. The polypeptide is Arginine--tRNA ligase, cytoplasmic (Rars1) (Rattus norvegicus (Rat)).